The following is a 969-amino-acid chain: Probable Rho-type GTPase-activating protein 3 (969 aa).

LIM zinc-binding domains lie at 17-81 and 76-135; these read TVCF…CTAC and HTCT…RHPS. Disordered stretches follow at residues 170–223, 348–459, and 613–646; these read IEIM…ADSL, ATSP…VEEL, and TSSK…SPNL. A compositionally biased stretch (polar residues) spans 193-202; the sequence is ETPTNMSQAE. 2 stretches are compositionally biased toward low complexity: residues 212-223 and 350-361; these read DSNLASNSADSL and SPFRPFSPSYRS. 2 stretches are compositionally biased toward polar residues: residues 369–392 and 418–432; these read TRSP…SFAQ and LSET…SLGS. A compositionally biased stretch (basic and acidic residues) spans 450 to 459; that stretch reads SERDSDVEEL. The segment covering 613–623 has biased composition (low complexity); sequence TSSKNTTSSIN. Positions 624–637 are enriched in polar residues; sequence PLTAVSSNSGQSSG. Residues 697 to 744 form a Phorbol-ester/DAG-type zinc finger; that stretch reads DHVFHVNAIFKPSRCYICSESVWGSELRCFHCSISCHSRCLKRLFAES. Positions 780–966 constitute a Rho-GAP domain; the sequence is RSLENQLKIE…FMLDNVDKIL (187 aa).

Interacts with dil1.

It localises to the cell tip. In terms of biological role, GTPase-activating protein for Rho-type proteins. In Schizosaccharomyces pombe (strain 972 / ATCC 24843) (Fission yeast), this protein is Probable Rho-type GTPase-activating protein 3 (rga3).